The following is a 141-amino-acid chain: Aspartate 1-decarboxylase (141 aa).

S25 acts as the Schiff-base intermediate with substrate; via pyruvic acid in catalysis. The residue at position 25 (S25) is a Pyruvic acid (Ser). Substrate is bound at residue T57. The active-site Proton donor is Y58. 73–75 (GAA) is a binding site for substrate.

Belongs to the PanD family. As to quaternary structure, heterooctamer of four alpha and four beta subunits. It depends on pyruvate as a cofactor. Post-translationally, is synthesized initially as an inactive proenzyme, which is activated by self-cleavage at a specific serine bond to produce a beta-subunit with a hydroxyl group at its C-terminus and an alpha-subunit with a pyruvoyl group at its N-terminus.

It is found in the cytoplasm. The catalysed reaction is L-aspartate + H(+) = beta-alanine + CO2. The protein operates within cofactor biosynthesis; (R)-pantothenate biosynthesis; beta-alanine from L-aspartate: step 1/1. Catalyzes the pyruvoyl-dependent decarboxylation of aspartate to produce beta-alanine. The sequence is that of Aspartate 1-decarboxylase from Salinispora arenicola (strain CNS-205).